A 296-amino-acid polypeptide reads, in one-letter code: uncharacterized protein (296 aa).

The N-terminal stretch at 1-20 (MRKFIFVLLTLLLVSPFSFA) is a signal peptide.

This is an uncharacterized protein from Escherichia coli (strain K12).